Here is a 192-residue protein sequence, read N- to C-terminus: NADH-quinone oxidoreductase subunit B (192 aa).

C71, C72, C136, and C166 together coordinate [4Fe-4S] cluster.

It belongs to the complex I 20 kDa subunit family. NDH-1 is composed of 14 different subunits. Subunits NuoB, C, D, E, F, and G constitute the peripheral sector of the complex. The cofactor is [4Fe-4S] cluster.

Its subcellular location is the cell inner membrane. The catalysed reaction is a quinone + NADH + 5 H(+)(in) = a quinol + NAD(+) + 4 H(+)(out). Functionally, NDH-1 shuttles electrons from NADH, via FMN and iron-sulfur (Fe-S) centers, to quinones in the respiratory chain. The immediate electron acceptor for the enzyme in this species is believed to be ubiquinone. Couples the redox reaction to proton translocation (for every two electrons transferred, four hydrogen ions are translocated across the cytoplasmic membrane), and thus conserves the redox energy in a proton gradient. This is NADH-quinone oxidoreductase subunit B from Sinorhizobium medicae (strain WSM419) (Ensifer medicae).